A 238-amino-acid polypeptide reads, in one-letter code: Ribonuclease 3 (238 aa).

Residues 11 to 136 form the RNase III domain; sequence RARLEAAIGY…LIAAIYLDGG (126 aa). E49 is a Mg(2+) binding site. D53 is a catalytic residue. The Mg(2+) site is built by D122 and E125. E125 is an active-site residue. The region spanning 161-230 is the DRBM domain; that stretch reads DAKTELQEWA…AMKLLEREGV (70 aa).

Belongs to the ribonuclease III family. Homodimer. Mg(2+) serves as cofactor.

The protein resides in the cytoplasm. The enzyme catalyses Endonucleolytic cleavage to 5'-phosphomonoester.. Its function is as follows. Digests double-stranded RNA. Involved in the processing of primary rRNA transcript to yield the immediate precursors to the large and small rRNAs (23S and 16S). Processes some mRNAs, and tRNAs when they are encoded in the rRNA operon. Processes pre-crRNA and tracrRNA of type II CRISPR loci if present in the organism. In Rhizobium meliloti (strain 1021) (Ensifer meliloti), this protein is Ribonuclease 3.